Here is a 300-residue protein sequence, read N- to C-terminus: Ribosomal protein bS6--L-glutamate ligase (300 aa).

The region spanning 104 to 287 is the ATP-grasp domain; the sequence is MQLLARQGID…IAGKMIRWIE (184 aa). Residues lysine 141, 178-179, aspartate 187, and 211-213 each bind ATP; these read EY and RSN. Aspartate 248, glutamate 260, and asparagine 262 together coordinate Mg(2+). Mn(2+) contacts are provided by aspartate 248, glutamate 260, and asparagine 262.

Belongs to the RimK family. Requires Mg(2+) as cofactor. Mn(2+) is required as a cofactor.

An L-glutamate ligase that catalyzes the ATP-dependent post-translational addition of glutamate residues to the C-terminus of ribosomal protein bS6 (RpsF). Is also able to catalyze the synthesis of poly-alpha-glutamate in vitro, via ATP hydrolysis from unprotected glutamate as substrate. The number of glutamate residues added to either RpsF or to poly-alpha-glutamate changes with pH. This Escherichia coli O139:H28 (strain E24377A / ETEC) protein is Ribosomal protein bS6--L-glutamate ligase.